The chain runs to 513 residues: Activin receptor type-2A (513 aa).

An N-terminal signal peptide occupies residues M1–G19. The Extracellular segment spans residues A20–P135. 5 disulfides stabilise this stretch: C30-C60, C50-C78, C85-C104, C91-C103, and C105-C110. N43 and N66 each carry an N-linked (GlcNAc...) asparagine glycan. Residues Y136–Y161 form a helical membrane-spanning segment. At R162 to L513 the chain is on the cytoplasmic side. Residues L192 to L485 enclose the Protein kinase domain. ATP-binding positions include K198–V206 and K219. The active-site Proton acceptor is the D322.

This sequence belongs to the protein kinase superfamily. TKL Ser/Thr protein kinase family. TGFB receptor subfamily. Part of a complex consisting of MAGI2/ARIP1, ACVR2A, ACVR1B and SMAD3. Interacts with MAGI2/ARIP1. Interacts with type I receptor ACVR1. Interacts with BMP7. Interacts with TSC22D1/TSC-22. Interacts with activin A/INHBA. Mg(2+) is required as a cofactor. Requires Mn(2+) as cofactor.

It localises to the cell membrane. It catalyses the reaction L-threonyl-[receptor-protein] + ATP = O-phospho-L-threonyl-[receptor-protein] + ADP + H(+). The catalysed reaction is L-seryl-[receptor-protein] + ATP = O-phospho-L-seryl-[receptor-protein] + ADP + H(+). On ligand binding, forms a receptor complex consisting of two type II and two type I transmembrane serine/threonine kinases. Type II receptors phosphorylate and activate type I receptors which autophosphorylate, then bind and activate SMAD transcriptional regulators. Receptor for activin A, activin B and inhibin A. Mediates induction of adipogenesis by GDF6. The sequence is that of Activin receptor type-2A from Homo sapiens (Human).